The following is a 226-amino-acid chain: UPF0173 metal-dependent hydrolase Msed_2125 (226 aa).

The protein belongs to the UPF0173 family.

This is UPF0173 metal-dependent hydrolase Msed_2125 from Metallosphaera sedula (strain ATCC 51363 / DSM 5348 / JCM 9185 / NBRC 15509 / TH2).